A 215-amino-acid polypeptide reads, in one-letter code: Pyrrolidone-carboxylate peptidase (215 aa).

Active-site residues include Glu-80, Cys-143, and His-167.

This sequence belongs to the peptidase C15 family. Homotetramer.

The protein resides in the cytoplasm. It carries out the reaction Release of an N-terminal pyroglutamyl group from a polypeptide, the second amino acid generally not being Pro.. In terms of biological role, removes 5-oxoproline from various penultimate amino acid residues except L-proline. This chain is Pyrrolidone-carboxylate peptidase, found in Bacillus cytotoxicus (strain DSM 22905 / CIP 110041 / 391-98 / NVH 391-98).